A 519-amino-acid polypeptide reads, in one-letter code: Molybdate transporter 1 (519 aa).

7 helical membrane-spanning segments follow: residues 98 to 118, 164 to 184, 370 to 390, 412 to 432, 436 to 456, 464 to 484, and 485 to 505; these read LLHAGLFVAGCVGLLGASQAI, LGTEGLVVGAVALAAMIATTL, AVALSVALLNGAGVWLGAMPC, ILLGCIKAALGLLFGGSLVVL, FPQPLLGALLTVSGIELASVV, GYTFALLTAVAILALDNTGTG, and FLVGLVGVAAVAAYEGAVAAA.

Belongs to the SLC26A/SulP transporter (TC 2.A.53) family.

The protein localises to the membrane. 60% inhibition by 20 uM tungstate or by lack of glucose in the medium, but no inhibition by sulfate. Functionally, high affinity molybdate transporter. Acts through an energy-dependent process. The chain is Molybdate transporter 1 (MOT1) from Chlamydomonas reinhardtii (Chlamydomonas smithii).